Reading from the N-terminus, the 235-residue chain is MAEILCTICARGGSKGVKNKNIRKINKLEMIAYSIIQAQNSKLFKHIVISTDSDEIASVAQKYGAEVFFKREAHLANDRTAKLPVMRDALLRSEEHFKTCFETLIDLDASAPLRSSLDIKKAYESFVENDNSNLITAVPARRNPYFNLVEIQNNKVVKSKEGNFTTRQSAPKCYDMNASIYIFKRDYLLENDSVFGKNTGLFVMDESTAFDIDSELDFKIVEFLISLKNLSPKDF.

This sequence belongs to the CMP-NeuNAc synthase family.

It catalyses the reaction N,N-diacetyllegionaminate + CTP = CMP-N,N-diacetyllegionaminate + diphosphate. Functionally, involved in biosynthesis of legionaminic acid (5,7-diamino-3,5,7,9-tetradeoxy-D-glycero-D-galacto-non-2-ulosonic acid)(Leg), a sialic acid-like derivative that is incorporated into flagellin via O-linkage to Ser/Thr. Catalyzes the conversion of N,N'-diacetyllegionaminic acid (Leg5Ac7Ac) and CTP into CMP-N,N'-diacetyllegionaminic acid (CMP-Leg5Ac7Ac). This Campylobacter jejuni subsp. jejuni serotype O:2 (strain ATCC 700819 / NCTC 11168) protein is CMP-N,N'-diacetyllegionaminic acid synthase (legF).